The following is a 195-amino-acid chain: SXP/RAL-2-like protein 2 (195 aa).

The segment at 162–195 (EKVHGGSHGGLRGGPGGPRDGPRGGPRGGPRGGR) is disordered. The span at 167–195 (GSHGGLRGGPGGPRDGPRGGPRGGPRGGR) shows a compositional bias: gly residues.

It belongs to the SXP/RAL-2 family.

The protein is SXP/RAL-2-like protein 2 of Caenorhabditis elegans.